The following is a 109-amino-acid chain: Large ribosomal subunit protein uL23 (109 aa).

Belongs to the universal ribosomal protein uL23 family. As to quaternary structure, part of the 50S ribosomal subunit. Contacts protein L29, and trigger factor when it is bound to the ribosome.

One of the early assembly proteins it binds 23S rRNA. One of the proteins that surrounds the polypeptide exit tunnel on the outside of the ribosome. Forms the main docking site for trigger factor binding to the ribosome. This chain is Large ribosomal subunit protein uL23, found in Chlorobium phaeobacteroides (strain BS1).